The primary structure comprises 163 residues: Nodulin-13 (163 aa).

Positions 68 and 82 each coordinate kinetin. N(6)-dimethylallyladenine contacts are provided by Q68 and Y82. The trans-zeatin site is built by Q68, Y82, and Y133.

Belongs to the BetVI family. In terms of assembly, homodimer. In terms of tissue distribution, expressed in nodules, but not in leaves, stems, flowers and roots. Specifically located in the nodule cortex.

Functionally, may be involved in nodule organogenesis rather in the processes related to nitrogen fixation or interactions with the bacteria. May regulate nodulation by controlling the levels of freely available cytokinins. This chain is Nodulin-13 (N13), found in Medicago truncatula (Barrel medic).